Consider the following 382-residue polypeptide: MTEQRPLTIALVAGETSGDILGAGLIRALKERVPNARFVGVAGPRMQAEGCEAWYEMEELAVMGIVEVLGRLRRLLHIRADLTKRFGELKPDVFVGIDAPDFNIILEGNLKKQGIKTIHYVSPSVWAWRQKRVFKIGRATDLVLAFLPFEKAFYDKYNVPCRFIGHTMADAMPLDPDKNSARDVLGIPYDAHCLALLPGSRGAEVEMLSADFLKTAQLLRQTYPDLEIVVPLVNAKRREQFERIKAAVAPDLSVHLLDGMGREAMVASDAALLASGTAALECMLAKCPMVVGYRMKPFTFWLAKRLVKTDYVSLPNLLAGRELVKELLQEECEPQKLAAALLPLLANGKTSHAMHDTFRELHQQIRCNADEQAAQAVLELAQ.

Belongs to the LpxB family.

It carries out the reaction 2-N,3-O-bis[(3R)-3-hydroxytetradecanoyl]-alpha-D-glucosaminyl 1-phosphate + UDP-2-N,3-O-bis[(3R)-3-hydroxytetradecanoyl]-alpha-D-glucosamine = lipid A disaccharide (E. coli) + UDP + H(+). The enzyme catalyses a lipid X + a UDP-2-N,3-O-bis[(3R)-3-hydroxyacyl]-alpha-D-glucosamine = a lipid A disaccharide + UDP + H(+). The protein operates within glycolipid biosynthesis; lipid IV(A) biosynthesis; lipid IV(A) from (3R)-3-hydroxytetradecanoyl-[acyl-carrier-protein] and UDP-N-acetyl-alpha-D-glucosamine: step 5/6. Functionally, condensation of UDP-2,3-diacylglucosamine and 2,3-diacylglucosamine-1-phosphate to form lipid A disaccharide, a precursor of lipid A, a phosphorylated glycolipid that anchors the lipopolysaccharide to the outer membrane of the cell. The protein is Lipid-A-disaccharide synthase of Escherichia coli O157:H7.